A 342-amino-acid polypeptide reads, in one-letter code: tRNA N6-adenosine threonylcarbamoyltransferase (342 aa).

2 residues coordinate Fe cation: His-111 and His-115. Substrate is bound by residues 133 to 137 (VVSGG), Asp-166, Gly-179, Asp-183, and Asn-273. Asp-301 provides a ligand contact to Fe cation.

It belongs to the KAE1 / TsaD family. Fe(2+) serves as cofactor.

It localises to the cytoplasm. It carries out the reaction L-threonylcarbamoyladenylate + adenosine(37) in tRNA = N(6)-L-threonylcarbamoyladenosine(37) in tRNA + AMP + H(+). Functionally, required for the formation of a threonylcarbamoyl group on adenosine at position 37 (t(6)A37) in tRNAs that read codons beginning with adenine. Is involved in the transfer of the threonylcarbamoyl moiety of threonylcarbamoyl-AMP (TC-AMP) to the N6 group of A37, together with TsaE and TsaB. TsaD likely plays a direct catalytic role in this reaction. In Trichlorobacter lovleyi (strain ATCC BAA-1151 / DSM 17278 / SZ) (Geobacter lovleyi), this protein is tRNA N6-adenosine threonylcarbamoyltransferase.